The sequence spans 244 residues: Gamma-gliadin (244 aa).

Positions 18-64 (QQPFLQQPQQPSPQPQQVVQIISPATPTTIPSAGKPTSAPFPQQQQQ) are disordered. Residues 35–48 (VVQIISPATPTTIP) show a composition bias toward polar residues.

Belongs to the gliadin/glutenin family.

Its function is as follows. Gliadin is the major seed storage protein in wheat. The polypeptide is Gamma-gliadin (Triticum aestivum (Wheat)).